The primary structure comprises 127 residues: Phosphoribosyl-ATP pyrophosphatase (127 aa).

It belongs to the PRA-PH family.

It is found in the cytoplasm. It carries out the reaction 1-(5-phospho-beta-D-ribosyl)-ATP + H2O = 1-(5-phospho-beta-D-ribosyl)-5'-AMP + diphosphate + H(+). The protein operates within amino-acid biosynthesis; L-histidine biosynthesis; L-histidine from 5-phospho-alpha-D-ribose 1-diphosphate: step 2/9. The protein is Phosphoribosyl-ATP pyrophosphatase of Polaromonas sp. (strain JS666 / ATCC BAA-500).